We begin with the raw amino-acid sequence, 203 residues long: GTP cyclohydrolase-2 (203 aa).

49-53 (RIHSE) is a GTP binding site. Residues Cys-54, Cys-65, and Cys-67 each contribute to the Zn(2+) site. Residues Gln-70, 92 to 94 (EGR), and Thr-114 contribute to the GTP site. Asp-126 (proton acceptor) is an active-site residue. Arg-128 serves as the catalytic Nucleophile. 2 residues coordinate GTP: Thr-149 and Lys-154.

Belongs to the GTP cyclohydrolase II family. It depends on Zn(2+) as a cofactor.

It carries out the reaction GTP + 4 H2O = 2,5-diamino-6-hydroxy-4-(5-phosphoribosylamino)-pyrimidine + formate + 2 phosphate + 3 H(+). Its pathway is cofactor biosynthesis; riboflavin biosynthesis; 5-amino-6-(D-ribitylamino)uracil from GTP: step 1/4. Catalyzes the conversion of GTP to 2,5-diamino-6-ribosylamino-4(3H)-pyrimidinone 5'-phosphate (DARP), formate and pyrophosphate. The chain is GTP cyclohydrolase-2 from Shewanella sp. (strain ANA-3).